Here is a 327-residue protein sequence, read N- to C-terminus: Phosphate acyltransferase (327 aa).

The protein belongs to the PlsX family. Homodimer. Probably interacts with PlsY.

It localises to the cytoplasm. It catalyses the reaction a fatty acyl-[ACP] + phosphate = an acyl phosphate + holo-[ACP]. Its pathway is lipid metabolism; phospholipid metabolism. In terms of biological role, catalyzes the reversible formation of acyl-phosphate (acyl-PO(4)) from acyl-[acyl-carrier-protein] (acyl-ACP). This enzyme utilizes acyl-ACP as fatty acyl donor, but not acyl-CoA. The chain is Phosphate acyltransferase from Thermosipho africanus (strain TCF52B).